Reading from the N-terminus, the 201-residue chain is Glycerol-3-phosphate acyltransferase (201 aa).

6 helical membrane-spanning segments follow: residues 3–23, 51–71, 85–105, 116–136, 137–157, and 158–178; these read TVLFALGAYLIGSISFAVVVS, KAAILTLLGDGAKGFLAVWLV, VALVAIAVFLGHLWPVFFRFV, VLLALNGWLGLATLVTWLVIA, YAFRYSSLAALIAAIFAPFYY, and GLLFGPDVILLAVLAMSILLV.

It belongs to the PlsY family. Probably interacts with PlsX.

The protein localises to the cell inner membrane. The enzyme catalyses an acyl phosphate + sn-glycerol 3-phosphate = a 1-acyl-sn-glycero-3-phosphate + phosphate. Its pathway is lipid metabolism; phospholipid metabolism. Catalyzes the transfer of an acyl group from acyl-phosphate (acyl-PO(4)) to glycerol-3-phosphate (G3P) to form lysophosphatidic acid (LPA). This enzyme utilizes acyl-phosphate as fatty acyl donor, but not acyl-CoA or acyl-ACP. The chain is Glycerol-3-phosphate acyltransferase from Janthinobacterium sp. (strain Marseille) (Minibacterium massiliensis).